The following is a 461-amino-acid chain: CUGBP Elav-like family member 3 (461 aa).

RRM domains lie at 7-88 (IKLF…PADS) and 95-175 (RKLF…FADT). Pro residues predominate over residues 345–358 (PPALVAQQPPPPPQ). Positions 345 to 375 (PPALVAQQPPPPPQQQQQQQQQQQQREGPDG) are disordered. The segment covering 359 to 369 (QQQQQQQQQQQ) has biased composition (low complexity). Positions 376-454 (CNIFIYHLPQ…KRLKVQLKRP (79 aa)) constitute an RRM 3 domain.

The protein belongs to the CELF/BRUNOL family.

It is found in the nucleus. It localises to the cytoplasm. Functionally, RNA-binding protein involved in the regulation of pre-mRNA alternative splicing. Mediates exon inclusion and/or exclusion in pre-mRNA that are subject to tissue-specific and developmentally regulated alternative splicing. Specifically activates exon 5 inclusion of cardiac isoforms of TNNT2 during heart remodeling at the juvenile to adult transition. Activates the splicing of MAPT/Tau exon 10. Binds to muscle-specific splicing enhancer (MSE) intronic sites flanking the alternative exon 5 of TNNT2 pre-mRNA. The protein is CUGBP Elav-like family member 3 (CELF3) of Bos taurus (Bovine).